The sequence spans 304 residues: Glycine--tRNA ligase alpha subunit (304 aa).

The protein belongs to the class-II aminoacyl-tRNA synthetase family. In terms of assembly, tetramer of two alpha and two beta subunits.

It is found in the cytoplasm. It carries out the reaction tRNA(Gly) + glycine + ATP = glycyl-tRNA(Gly) + AMP + diphosphate. This is Glycine--tRNA ligase alpha subunit from Vibrio atlanticus (strain LGP32) (Vibrio splendidus (strain Mel32)).